Consider the following 423-residue polypeptide: ER-bound oxygenase mpaB' (423 aa).

Over 1–22 (MSLSLPPALSELARALPYSRTQ) the chain is Lumenal. A helical membrane pass occupies residues 23-41 (WLPILVGFLIGYPLLIKAL). The Cytoplasmic segment spans residues 42–423 (RYKRLGEMKK…ISRTGKCPFH (382 aa)).

It belongs to the mpaB oxygenase family.

Its subcellular location is the endoplasmic reticulum membrane. It catalyses the reaction 4-farnesyl-3,5-dihydroxy-6-methylphthalide + AH2 + 2 O2 = (4E,8E)-10-(4,6-dihydroxy-7-methyl-3-oxo-1,3-dihydro-2-benzofuran-5-yl)-4,8-dimethyldeca-4,8-dienoate + acetone + A + H2O + H(+). The protein operates within secondary metabolite biosynthesis; terpenoid biosynthesis. In terms of biological role, ER-bound oxygenase; part of the gene cluster that mediates the biosynthesis of mycophenolic acid (MPA), the first isolated antibiotic natural product in the world obtained from a culture of Penicillium brevicompactum in 1893. MpaB' catalyzes the oxidative cleavage the C19-C20 double bond in farnesyl-DHMP (FDHMP) to yield FDHMP-3C via a mycophenolic aldehyde intermediate. The first step of the pathway is the synthesis of 5-methylorsellinic acid (5MOA) by the cytosolic polyketide synthase mpaC. 5MOA is then converted to the phthalide compound 5,7-dihydroxy-4,6-dimethylphthalide (DHMP) by the endoplasmic reticulum-bound cytochrome P450 monooxygenase mpaDE. MpaDE first catalyzes hydroxylation of 5-MOA to 4,6-dihydroxy-2-(hydroxymethyl)-3-methylbenzoic acid (DHMB). MpaDE then acts as a lactone synthase that catalyzes the ring closure to convert DHMB into DHMP. The next step is the prenylation of DHMP by the Golgi apparatus-associated prenyltransferase mpaA to yield farnesyl-DHMP (FDHMP). The ER-bound oxygenase mpaB then mediates the oxidative cleavage the C19-C20 double bond in FDHMP to yield FDHMP-3C via a mycophenolic aldehyde intermediate. The O-methyltransferase mpaG catalyzes the methylation of FDHMP-3C to yield MFDHMP-3C. After the cytosolic methylation of FDHMP-3C, MFDHMP-3C enters into peroxisomes probably via free diffusion due to its low molecular weight. Upon a peroxisomal CoA ligation reaction, catalyzed by a beta-oxidation component enzyme acyl-CoA ligase ACL891, MFDHMP-3C-CoA would then be restricted to peroxisomes for the following beta-oxidation pathway steps. The peroxisomal beta-oxidation machinery than converts MFDHMP-3C-CoA into MPA_CoA, via a beta-oxidation chain-shortening process. Finally mpaH acts as a peroxisomal acyl-CoA hydrolase with high substrate specificity toward MPA-CoA to release the final product MPA. The protein is ER-bound oxygenase mpaB' of Penicillium brevicompactum.